The primary structure comprises 247 residues: Carboxy-S-adenosyl-L-methionine synthase (247 aa).

Residues tyrosine 39, 64 to 66 (GCS), 89 to 90 (DN), 117 to 118 (DI), asparagine 132, and arginine 199 contribute to the S-adenosyl-L-methionine site.

This sequence belongs to the class I-like SAM-binding methyltransferase superfamily. Cx-SAM synthase family. In terms of assembly, homodimer.

The catalysed reaction is prephenate + S-adenosyl-L-methionine = carboxy-S-adenosyl-L-methionine + 3-phenylpyruvate + H2O. Catalyzes the conversion of S-adenosyl-L-methionine (SAM) to carboxy-S-adenosyl-L-methionine (Cx-SAM). The polypeptide is Carboxy-S-adenosyl-L-methionine synthase (Salmonella agona (strain SL483)).